We begin with the raw amino-acid sequence, 203 residues long: FMN-dependent NADH:quinone oxidoreductase (203 aa).

FMN contacts are provided by residues serine 9, serine 15–serine 17, and threonine 139–glycine 142.

It belongs to the azoreductase type 1 family. As to quaternary structure, homodimer. FMN is required as a cofactor.

It carries out the reaction 2 a quinone + NADH + H(+) = 2 a 1,4-benzosemiquinone + NAD(+). It catalyses the reaction N,N-dimethyl-1,4-phenylenediamine + anthranilate + 2 NAD(+) = 2-(4-dimethylaminophenyl)diazenylbenzoate + 2 NADH + 2 H(+). Quinone reductase that provides resistance to thiol-specific stress caused by electrophilic quinones. Functionally, also exhibits azoreductase activity. Catalyzes the reductive cleavage of the azo bond in aromatic azo compounds to the corresponding amines. This Albidiferax ferrireducens (strain ATCC BAA-621 / DSM 15236 / T118) (Rhodoferax ferrireducens) protein is FMN-dependent NADH:quinone oxidoreductase.